Here is a 141-residue protein sequence, read N- to C-terminus: Hemoglobin subunit alpha (141 aa).

Residues 1-141 (VLSSADKANI…VSTVLTSKYR (141 aa)) form the Globin domain. A Phosphoserine modification is found at serine 3. N6-succinyllysine is present on residues lysine 7 and lysine 11. Lysine 16 carries the N6-acetyllysine; alternate modification. Lysine 16 bears the N6-succinyllysine; alternate mark. Tyrosine 24 carries the phosphotyrosine modification. Residue lysine 40 is modified to N6-succinyllysine. Serine 49 is modified (phosphoserine). Histidine 58 is an O2 binding site. Histidine 87 provides a ligand contact to heme b. Serine 102 is modified (phosphoserine). Threonine 108 bears the Phosphothreonine mark. Position 131 is a phosphoserine (serine 131). Phosphothreonine is present on residues threonine 134 and threonine 137. Serine 138 carries the post-translational modification Phosphoserine.

It belongs to the globin family. In terms of assembly, heterotetramer of two alpha chains and two beta chains. In terms of tissue distribution, red blood cells.

Involved in oxygen transport from the lung to the various peripheral tissues. Its function is as follows. Hemopressin acts as an antagonist peptide of the cannabinoid receptor CNR1. Hemopressin-binding efficiently blocks cannabinoid receptor CNR1 and subsequent signaling. The polypeptide is Hemoglobin subunit alpha (HBA) (Crocuta crocuta (Spotted hyena)).